Consider the following 638-residue polypeptide: Phosphomethylpyrimidine synthase (638 aa).

Substrate-binding positions include N243, M272, Y301, H337, 357-359 (SRG), 398-401 (DGLR), and E437. Residue H441 coordinates Zn(2+). Y464 serves as a coordination point for substrate. Position 505 (H505) interacts with Zn(2+). Residues C585, C588, and C593 each contribute to the [4Fe-4S] cluster site.

It belongs to the ThiC family. In terms of assembly, homodimer. It depends on [4Fe-4S] cluster as a cofactor.

The catalysed reaction is 5-amino-1-(5-phospho-beta-D-ribosyl)imidazole + S-adenosyl-L-methionine = 4-amino-2-methyl-5-(phosphooxymethyl)pyrimidine + CO + 5'-deoxyadenosine + formate + L-methionine + 3 H(+). It participates in cofactor biosynthesis; thiamine diphosphate biosynthesis. Functionally, catalyzes the synthesis of the hydroxymethylpyrimidine phosphate (HMP-P) moiety of thiamine from aminoimidazole ribotide (AIR) in a radical S-adenosyl-L-methionine (SAM)-dependent reaction. This is Phosphomethylpyrimidine synthase from Aromatoleum aromaticum (strain DSM 19018 / LMG 30748 / EbN1) (Azoarcus sp. (strain EbN1)).